The sequence spans 875 residues: Ribonucleases P/MRP protein subunit POP1 (875 aa).

Disordered regions lie at residues 1-20, 35-54, and 119-140; these read MSGS…KNQL, EAVA…SESG, and EMRK…RKAH. Polar residues predominate over residues 39–54; it reads ASSTKTGTPSDLSESG. Thr-524 carries the phosphothreonine modification.

In terms of assembly, component of nuclear RNase P and RNase MRP complexes. RNase P consists of an RNA moiety and at least 9 protein subunits including POP1, POP3, POP4, POP5, POP6, POP7, POP8, RPP1 and RPR2. RNase MRP complex consists of an RNA moiety and at least 10 protein subunits including POP1, POP3, POP4, POP5, POP6, POP7, POP8, RMP1, RPP1 and SNM1, many of which are shared with the RNase P complex.

It is found in the cytoplasm. The protein resides in the nucleus. It catalyses the reaction Endonucleolytic cleavage of RNA, removing 5'-extranucleotides from tRNA precursor.. Its function is as follows. Required for processing of 5.8S rRNA (short form) at site A3 and for 5' and 3' processing of pre-tRNA. This is Ribonucleases P/MRP protein subunit POP1 (POP1) from Saccharomyces cerevisiae (strain ATCC 204508 / S288c) (Baker's yeast).